Reading from the N-terminus, the 350-residue chain is tRNA uridine(34) hydroxylase (350 aa).

Positions 146 to 240 constitute a Rhodanese domain; that stretch reads DDPDALFIDM…YARKAREQGL (95 aa). Cysteine 200 functions as the Cysteine persulfide intermediate in the catalytic mechanism.

The protein belongs to the TrhO family.

The enzyme catalyses uridine(34) in tRNA + AH2 + O2 = 5-hydroxyuridine(34) in tRNA + A + H2O. Functionally, catalyzes oxygen-dependent 5-hydroxyuridine (ho5U) modification at position 34 in tRNAs. The protein is tRNA uridine(34) hydroxylase of Shigella dysenteriae serotype 1 (strain Sd197).